We begin with the raw amino-acid sequence, 547 residues long: MSTFGYRRGLSKYESIDEDELLASLSAEELKELERELEDIEPDRNLPVGLRQKSLTEKTPTGTFSREALMAYWEKESQKLLEKERLGECGKVAEDKEESEEELIFTESNSEVSEEVYTEEEEEESQEEEEEEDSDEEERTIETAKGINGTVNYDSVNSDNSKPKIFKSQIENINLTNGSNGRNTESPAAIHPCGNPTVIEDALDKIKSNDPDTTEVNLNNIENITTQTLTRFAEALKDNTVVKTFSLANTHADDSAAMAIAEMLKVNEHITNVNVESNFITGKGILAIMRALQHNTVLTELRFHNQRHIMGSQVEMEIVKLLKENTTLLRLGYHFELPGPRMSMTSILTRNMDKQRQKRLQEQKQQEGYDGGPNLRTKVWQRGTPSSSPYVSPRHSPWSSPKLPKKVQTVRSRPLSPVATPPPPPPPPPPPPPSSQRLPPPPPPPPPPLPEKKLITRNIAEVIKQQESAQRALQNGQKKKKGKKVKKQPNSILKEIKNSLRSVQEKKMEDSSRPSTPQRSAHENLMEAIRGSSIKQLKRVEVPEALR.

Residues 1–47 (MSTFGYRRGLSKYESIDEDELLASLSAEELKELERELEDIEPDRNLP) form an interaction with tropomyosin alpha region. 3 interaction with actin regions span residues 1–161 (MSTF…SDNS), 162–497 (KPKI…KEIK), and 521–540 (AHEN…LKRV). A phosphoserine mark is found at Ser11, Ser15, and Ser24. A coiled-coil region spans residues 16 to 41 (IDEDELLASLSAEELKELERELEDIE). 2 disordered regions span residues 91 to 162 (KVAE…DNSK) and 352 to 533 (MDKQ…RGSS). Acidic residues-rich tracts occupy residues 95 to 104 (DKEESEEELI) and 112 to 139 (VSEE…EEER). A coiled-coil region spans residues 113-148 (SEEVYTEEEEEESQEEEEEEDSDEEERTIETAKGIN). The segment covering 149 to 160 (GTVNYDSVNSDN) has biased composition (polar residues). Residues 352–367 (MDKQRQKRLQEQKQQE) are compositionally biased toward basic and acidic residues. Ser400 is modified (phosphoserine). Over residues 419-449 (ATPPPPPPPPPPPPPSSQRLPPPPPPPPPPL) the composition is skewed to pro residues. Residues 465 to 475 (QQESAQRALQN) show a composition bias toward polar residues. Positions 477–487 (QKKKKGKKVKK) are enriched in basic residues. Basic and acidic residues predominate over residues 494–512 (KEIKNSLRSVQEKKMEDSS). In terms of domain architecture, WH2 spans 521 to 540 (AHENLMEAIRGSSIKQLKRV).

This sequence belongs to the tropomodulin family. In terms of assembly, can bind at least three actin monomers and thereby provides a nucleus for actin filament formation. Interacts (via N-terminus) with tropomyosin alpha (TPM1) (via N-terminus). May also interact with TPM2 (via N-terminus). Interacts with FLII. In terms of tissue distribution, specifically expressed in heart and skeletal muscles, with higher levels in heart (at protein level). Not expressed in other tissues.

The protein localises to the cytoplasm. Its subcellular location is the myofibril. It localises to the sarcomere. The protein resides in the m line. It is found in the cytoskeleton. Its function is as follows. Mediates nucleation of actin filaments and thereby promotes actin polymerization. Plays a role in the regulation of actin filament length. Required for normal sarcomere organization in the heart, and for normal heart function. This chain is Leiomodin-2 (LMOD2), found in Homo sapiens (Human).